A 70-amino-acid polypeptide reads, in one-letter code: Exodeoxyribonuclease 7 small subunit (70 aa).

Belongs to the XseB family. In terms of assembly, heterooligomer composed of large and small subunits.

The protein localises to the cytoplasm. It carries out the reaction Exonucleolytic cleavage in either 5'- to 3'- or 3'- to 5'-direction to yield nucleoside 5'-phosphates.. Functionally, bidirectionally degrades single-stranded DNA into large acid-insoluble oligonucleotides, which are then degraded further into small acid-soluble oligonucleotides. In Streptococcus pneumoniae serotype 2 (strain D39 / NCTC 7466), this protein is Exodeoxyribonuclease 7 small subunit.